The primary structure comprises 334 residues: Isocitrate/homoisocitrate dehydrogenase (334 aa).

Ala-70–Ser-72 contacts NADH. 8 residues coordinate (2R,3S)-homoisocitrate: Ser-72, Arg-85, Arg-88, Arg-98, Arg-118, Tyr-125, Lys-171, and Asn-173. Residue Asn-173 participates in NADH binding. Residues Asp-204, Asp-228, and Asp-232 each coordinate Mg(2+). Residues Gly-261 to Asp-265 and Asn-273 each bind NADH.

It belongs to the isocitrate and isopropylmalate dehydrogenases family. As to quaternary structure, homotetramer. Dimer of dimers. The homotetramer can transiently dissociate into homodimers. Mg(2+) serves as cofactor.

The enzyme catalyses (2R,3S)-homoisocitrate + NAD(+) = 2-oxoadipate + CO2 + NADH. The catalysed reaction is D-threo-isocitrate + NAD(+) = 2-oxoglutarate + CO2 + NADH. The protein operates within amino-acid biosynthesis; L-lysine biosynthesis via AAA pathway; L-alpha-aminoadipate from 2-oxoglutarate: step 4/5. Functionally, catalyzes the NAD(+)-dependent oxidative decarboxylation of homoisocitrate to 2-oxoadipate (alpha-ketoadipate), a reaction involved in lysine biosynthesis through the alpha-aminoadipate pathway. In addition, has high activity with isocitrate, but is inactive with 3-isopropylmalate. The polypeptide is Isocitrate/homoisocitrate dehydrogenase (hicd) (Thermus thermophilus (strain ATCC BAA-163 / DSM 7039 / HB27)).